The following is a 669-amino-acid chain: Sodium-dependent phosphate transporter (669 aa).

Residues 1–6 (MVTGPD) lie on the Extracellular side of the membrane. Residues 7–27 (MLWLVITSGIACFFMAFVTGA) form a helical membrane-spanning segment. Residues 28-47 (NDIANTFSTSIGSKAISIKK) are Cytoplasmic-facing. A helical membrane pass occupies residues 48-68 (ALIVAFFFEALGASLLGGTVT). Over 69 to 86 (DSIRSKIINFQVFYDTPE) the chain is Extracellular. The chain crosses the membrane as a helical span at residues 87–107 (FLMLGMCCALMGATVWLAVAT). Residue arginine 108 is a topological domain, cytoplasmic. A helical transmembrane segment spans residues 109-129 (AGLPVSTTHSIIGALLGFGLA). Over 130-143 (TGNMKSIKWEKINN) the chain is Extracellular. Residues 144–164 (IVISWLAAPILAGTCSAIAFT) form a helical membrane-spanning segment. The Cytoplasmic segment spans residues 165–186 (VLRMLILRKKNSFEIIKKMYWF). Residues 187-207 (LIFLITLPFSVFLIFHNPIVI) form a helical membrane-spanning segment. Residues 208–239 (NTQCKMKKDGKVIVSSPCYIEDWSAAHSFYAS) lie on the Extracellular side of the membrane. The chain crosses the membrane as a helical span at residues 240–260 (IICILLSSLLTAIGSFVIYII). The Cytoplasmic portion of the chain corresponds to 261–502 (YNKRINNYNL…YNNGIRGKIK (242 aa)). A compositionally biased stretch (polar residues) spans 311-335 (AHNNTSNGTKQNQVGNGTKSNNNNV). Disordered regions lie at residues 311–364 (AHNN…SVEA) and 392–444 (TNMN…KNME). Basic and acidic residues predominate over residues 342–352 (KNVKSQQDDSK). The span at 395 to 433 (NENNNNSNKNNNSNKNNNSNKNNNSNKNNNSNNGNSNEG) shows a compositional bias: low complexity. The chain crosses the membrane as a helical span at residues 503–523 (VQWYILLFGGLSMSLGLSIMG). At 524 to 542 (YRVIKTVGMKLIKITPARG) the chain is on the extracellular side. The chain crosses the membrane as a helical span at residues 543–563 (FTIELISGLVVLFFSICGIPL). Over 564–632 (SSTHCAVSSV…TSCVNLRLFR (69 aa)) the chain is Cytoplasmic. The chain crosses the membrane as a helical span at residues 633–653 (TVFLSWILTVVFSATVTAGIY). Residues 654-669 (SFAAYSPSYIMKMQTV) lie on the Extracellular side of the membrane.

The protein belongs to the inorganic phosphate transporter (PiT) (TC 2.A.20) family.

The protein localises to the cell membrane. It carries out the reaction 2 Na(+)(out) + phosphate(out) = 2 Na(+)(in) + phosphate(in). Its function is as follows. Sodium-phosphate symporter which preferentially transports the monovalent form of phosphate with a stoichiometry of two sodium ions per phosphate ion. In Plasmodium falciparum, this protein is Sodium-dependent phosphate transporter.